Consider the following 218-residue polypeptide: Transmembrane gamma-carboxyglutamic acid protein 1 (218 aa).

Residues 1-20 constitute a propeptide that is removed on maturation; the sequence is MGRIFLTGEKANSVLKRYPR. Positions 20–66 constitute a Gla domain; that stretch reads RANGLFEEIRQGNIERECKEEVCTFEEAREAFENNEKTKEFWNTYTK. Residues 21–80 lie on the Extracellular side of the membrane; the sequence is ANGLFEEIRQGNIERECKEEVCTFEEAREAFENNEKTKEFWNTYTKAQQGESNRGSDWFQ. Cysteines 37 and 42 form a disulfide. A helical membrane pass occupies residues 81-101; it reads FYLTFPLIFGLFIILLVIFLI. The Cytoplasmic segment spans residues 102 to 218; that stretch reads WRCFLRNKTR…AMVPVATTIK (117 aa). The interval 160–192 is disordered; the sequence is STRLSNCDPPPTYEEATGQMNLRRSETEPHLDP. Basic and acidic residues predominate over residues 182-192; that stretch reads RRSETEPHLDP.

Gla residues are produced after subsequent post-translational modifications of glutamate by a vitamin K-dependent gamma-carboxylase.

The protein resides in the membrane. In Bos taurus (Bovine), this protein is Transmembrane gamma-carboxyglutamic acid protein 1 (PRRG1).